We begin with the raw amino-acid sequence, 205 residues long: NADH-quinone oxidoreductase subunit J (205 aa).

Transmembrane regions (helical) follow at residues Met1–Leu21, Val26–Leu46, Met54–Leu74, Leu89–Leu109, and Phe142–Thr162.

The protein belongs to the complex I subunit 6 family.

It is found in the cell membrane. It carries out the reaction a quinone + NADH + 5 H(+)(in) = a quinol + NAD(+) + 4 H(+)(out). Its function is as follows. NDH-1 shuttles electrons from NADH, via FMN and iron-sulfur (Fe-S) centers, to quinones in the respiratory chain. Couples the redox reaction to proton translocation (for every two electrons transferred, four hydrogen ions are translocated across the cytoplasmic membrane), and thus conserves the redox energy in a proton gradient. The chain is NADH-quinone oxidoreductase subunit J (nuoJ) from Rickettsia conorii (strain ATCC VR-613 / Malish 7).